Reading from the N-terminus, the 391-residue chain is 8-amino-7-oxononanoate synthase (391 aa).

Residue arginine 19 coordinates substrate. 106–107 (GY) is a binding site for pyridoxal 5'-phosphate. Position 131 (histidine 131) interacts with substrate. Pyridoxal 5'-phosphate contacts are provided by serine 178, histidine 206, and threonine 234. Lysine 237 carries the N6-(pyridoxal phosphate)lysine modification. A substrate-binding site is contributed by threonine 353.

The protein belongs to the class-II pyridoxal-phosphate-dependent aminotransferase family. BioF subfamily. In terms of assembly, homodimer. Pyridoxal 5'-phosphate serves as cofactor.

The enzyme catalyses 6-carboxyhexanoyl-[ACP] + L-alanine + H(+) = (8S)-8-amino-7-oxononanoate + holo-[ACP] + CO2. It functions in the pathway cofactor biosynthesis; biotin biosynthesis. Functionally, catalyzes the decarboxylative condensation of pimeloyl-[acyl-carrier protein] and L-alanine to produce 8-amino-7-oxononanoate (AON), [acyl-carrier protein], and carbon dioxide. This chain is 8-amino-7-oxononanoate synthase, found in Geobacter metallireducens (strain ATCC 53774 / DSM 7210 / GS-15).